Reading from the N-terminus, the 246-residue chain is Transcription factor A, mitochondrial (246 aa).

The N-terminal 42 residues, 1–42 (MALLRGVWGVLNALGKSGADLCAGCGSRLRYPFSFAYVPKWF), are a transit peptide targeting the mitochondrion. Positions 50–118 (PKKPMTSYVR…VYKEEINRIQ (69 aa)) form a DNA-binding region, HMG box 1. 2 positions are modified to phosphoserine; by PKA: Ser56 and Ser61. Position 122 is a phosphothreonine (Thr122). Residues 155-219 (PKRPRSAYNI…RYYNEMKSWE (65 aa)) constitute a DNA-binding region (HMG box 2). A Phosphoserine; by PKA modification is found at Ser160. Ser193 and Ser195 each carry phosphoserine.

In terms of assembly, monomer; binds DNA as a monomer. Homodimer. Component of the mitochondrial transcription initiation complex, composed at least of TFB2M, TFAM and POLRMT. In this complex TFAM recruits POLRMT to the promoter whereas TFB2M induces structural changes in POLRMT to enable promoter opening and trapping of the DNA non-template strand. Upon metabolic stress, forms a complex composed of FOXO3, SIRT3, TFAM and POLRMT. Interacts with TFB1M and TFB2M. Interacts with CLPX; this enhances DNA-binding. In terms of processing, phosphorylation by PKA within the HMG box 1 impairs DNA binding and promotes degradation by the AAA+ Lon protease.

Its subcellular location is the mitochondrion. It localises to the mitochondrion matrix. The protein localises to the mitochondrion nucleoid. In terms of biological role, binds to the mitochondrial light strand promoter and functions in mitochondrial transcription regulation. Component of the mitochondrial transcription initiation complex, composed at least of TFB2M, TFAM and POLRMT that is required for basal transcription of mitochondrial DNA. In this complex, TFAM recruits POLRMT to a specific promoter whereas TFB2M induces structural changes in POLRMT to enable promoter opening and trapping of the DNA non-template strand. Required for accurate and efficient promoter recognition by the mitochondrial RNA polymerase. Promotes transcription initiation from the HSP1 and the light strand promoter by binding immediately upstream of transcriptional start sites. Is able to unwind DNA. Bends the mitochondrial light strand promoter DNA into a U-turn shape via its HMG boxes. Required for maintenance of normal levels of mitochondrial DNA. May play a role in organizing and compacting mitochondrial DNA. In Bos taurus (Bovine), this protein is Transcription factor A, mitochondrial.